The primary structure comprises 625 residues: E3 ubiquitin-protein ligase synoviolin (625 aa).

The Cytoplasmic segment spans residues 1-4 (MVRA). A helical membrane pass occupies residues 5 to 25 (ALVTATSLALTGAVVAHAYFL). Residues 26–40 (KHQFYPTVVYLTKSS) lie on the Lumenal side of the membrane. Residues 41-61 (PSMAVLYIQAFVLVFLLGKLM) form a helical membrane-spanning segment. Residues 62 to 98 (RKVFFGQLRAAEMEHLIERSWYAVTETCLAFTVFRDD) are Cytoplasmic-facing. The chain crosses the membrane as a helical span at residues 99–119 (FSPRFVALFTLLLFLKCFHWL). Topologically, residues 120–135 (AEDRVDFMERSPNISW) are lumenal. Residues 136–156 (VFHFRVLSLMVLLGVMDFLFV) traverse the membrane as a helical segment. Topologically, residues 157–169 (NHACHSIITRGAS) are cytoplasmic. The helical transmembrane segment at 170–190 (VQLVFGFEYAILMTMVLTTFI) threads the bilayer. The Lumenal portion of the chain corresponds to 191–212 (KYTLHTIDLQSENPWDNKAVYM). The helical transmembrane segment at 213-235 (LYTELFTGFIKVLLYMAFMTIMI) threads the bilayer. Residues 236–270 (KVHTFPLFAIRPMYLAMRQFKKAVTDAIMSRRAIR) form an interaction with p53/TP53 region. The Cytoplasmic segment spans residues 236–625 (KVHTFPLFAI…GNLLKLASVN (390 aa)). Residues Cys-291, Cys-294, Cys-307, His-309, His-312, Cys-315, Cys-326, and Cys-329 each coordinate Zn(2+). The RING-type; atypical zinc-finger motif lies at 291–330 (CIICREEMVTGAKKLPCNHIFHSSCLRSWFQRQQTCPTCR). Disordered regions lie at residues 337–361 (SQPN…NAPI), 390–434 (PPPA…SAAP), 462–487 (FMSS…LEQE), and 523–625 (LSPP…ASVN). The segment covering 342-361 (TPAPPAAQAPAPPAPANAPI) has biased composition (pro residues). Low complexity predominate over residues 423–434 (AQSTAEAASAAP). Positions 462-471 (FMSSMPPPPS) are enriched in pro residues. Over residues 523–564 (LSPPRSETNTGETSESANVESSPSTANTETAGQEIQSQSGES) the composition is skewed to polar residues.

It belongs to the HRD1 family. Homodimer.

Its subcellular location is the endoplasmic reticulum membrane. It carries out the reaction S-ubiquitinyl-[E2 ubiquitin-conjugating enzyme]-L-cysteine + [acceptor protein]-L-lysine = [E2 ubiquitin-conjugating enzyme]-L-cysteine + N(6)-ubiquitinyl-[acceptor protein]-L-lysine.. It participates in protein modification; protein ubiquitination. Functionally, E3 ubiquitin-protein ligase which accepts ubiquitin specifically from endoplasmic reticulum-associated UBC7 E2 ligase and transfers it to substrates, promoting their degradation. Component of the endoplasmic reticulum quality control (ERQC) system also called ER-associated degradation (ERAD) involved in ubiquitin-dependent degradation of misfolded endoplasmic reticulum proteins. Also promotes the degradation of normal but naturally short-lived proteins. Protects cells from ER stress-induced apoptosis. Sequesters p53 in the cytoplasm and promotes its degradation, thereby negatively regulating its biological function in transcription, cell cycle regulation and apoptosis. In Danio rerio (Zebrafish), this protein is E3 ubiquitin-protein ligase synoviolin (syvn1).